The sequence spans 392 residues: NAC domain-containing protein 58 (392 aa).

The NAC domain occupies 9–173; that stretch reads LPPGFRFHPT…DWVLCRIYKK (165 aa). Residues 317 to 345 are disordered; the sequence is STSAGAVVEPPAVTGKRKRSSDGGEPTIQ.

Expressed in leaves, nodes, internodes and mature seeds. Highly expressed in roots. Expressed in leaf sheaths, flag leaves and inflorescences. Expressed in primary and lateral roots, particularly in the vascular tissues. Expressed in the primary phloem of the culm and leaf sheaths. Expressed principally in the primary phloem and in the peripheral zone of the leaf vascular bundles. Expressed in the floral tissues.

It localises to the nucleus. In terms of biological role, transcription factor that acts as a positive regulator of the jasmonate (JA) pathway to mediate leaf senescence. May directly regulate LOX2, AOC, AOS2, AOC1 and OPR7, which are genes involved in the biosynthesis of JA. Regulates positively leaf senescence by directly targeting senescence-associated genes (SAGs) related to chlorophyll degradation, nutrient transport and other genes associated with abscisic acid-induced leaf senescence. Transcription activator that plays a role in mediating abiotic stress responses through the abscisic acid (ABA) pathway. Possesses transcriptional activator activity in yeast. In Oryza sativa subsp. japonica (Rice), this protein is NAC domain-containing protein 58.